Consider the following 91-residue polypeptide: Mercuric transport protein periplasmic component (91 aa).

A signal peptide spans methionine 1–alanine 19. Residues glutamine 22–serine 88 enclose the HMA domain. The Hg(2+) site is built by cysteine 33 and cysteine 36.

It belongs to the MerP family. As to quaternary structure, monomer.

It localises to the periplasm. Involved in mercury resistance. Acts as a mercury scavenger that specifically binds to a mercuric ion in the periplasm and probably passes it to the cytoplasmic mercuric reductase MerA via the mercuric transport protein MerT. This chain is Mercuric transport protein periplasmic component, found in Shigella flexneri.